We begin with the raw amino-acid sequence, 95 residues long: Co-chaperonin GroES (95 aa).

Belongs to the GroES chaperonin family. Heptamer of 7 subunits arranged in a ring. Interacts with the chaperonin GroEL.

It is found in the cytoplasm. In terms of biological role, together with the chaperonin GroEL, plays an essential role in assisting protein folding. The GroEL-GroES system forms a nano-cage that allows encapsulation of the non-native substrate proteins and provides a physical environment optimized to promote and accelerate protein folding. GroES binds to the apical surface of the GroEL ring, thereby capping the opening of the GroEL channel. The protein is Co-chaperonin GroES of Stenotrophomonas maltophilia (strain R551-3).